Consider the following 226-residue polypeptide: UPF0758 protein Sca_1264 (226 aa).

Residues 102 to 224 (KITSPQDAAD…YLSMVEGGYF (123 aa)) enclose the MPN domain. Residues histidine 173, histidine 175, and aspartate 186 each coordinate Zn(2+). The short motif at 173–186 (HNHPSGDVTPSKED) is the JAMM motif element.

The protein belongs to the UPF0758 family.

The protein is UPF0758 protein Sca_1264 of Staphylococcus carnosus (strain TM300).